The following is a 665-amino-acid chain: LisH domain-containing protein ARMC9 (665 aa).

The LisH domain occupies 7–39 (HESELLGLVKEYLDFAEFEDTLKTFSKECKIKG). Positions 201–235 (ENGQSNKEMLQQLHQQLVEAERRSMTYLKRYNKIQ) form a coiled coil. Serine 582 carries the phosphoserine modification. The segment at 642-665 (VQWSGDEPLQRPVTPGGHRNGYPV) is disordered.

In terms of assembly, interacts with TOGARAM1, CCDC66, CEP104, CSPP1 and CEP290. Interacts with NDUFAF2.

The protein resides in the cytoplasm. Its subcellular location is the cytoskeleton. The protein localises to the cilium basal body. It localises to the cell projection. It is found in the cilium. The protein resides in the microtubule organizing center. Its subcellular location is the centrosome. The protein localises to the centriole. Its function is as follows. Involved in ciliogenesis. It is required for appropriate acetylation and polyglutamylation of ciliary microtubules, and regulation of cilium length. Acts as a positive regulator of hedgehog (Hh)signaling. May participate in the trafficking and/or retention of GLI2 and GLI3 proteins at the ciliary tip. The sequence is that of LisH domain-containing protein ARMC9 (ARMC9) from Pongo abelii (Sumatran orangutan).